Consider the following 408-residue polypeptide: Argininosuccinate synthase (408 aa).

ATP is bound by residues 11-19 and A38; that span reads AYSGGLDTS. Residues Y91 and S96 each coordinate L-citrulline. G121 is an ATP binding site. 3 residues coordinate L-aspartate: T123, N127, and D128. N127 contributes to the L-citrulline binding site. Residues R131, S182, S191, E267, and Y279 each coordinate L-citrulline.

Belongs to the argininosuccinate synthase family. Type 1 subfamily. In terms of assembly, homotetramer.

The protein localises to the cytoplasm. It carries out the reaction L-citrulline + L-aspartate + ATP = 2-(N(omega)-L-arginino)succinate + AMP + diphosphate + H(+). It participates in amino-acid biosynthesis; L-arginine biosynthesis; L-arginine from L-ornithine and carbamoyl phosphate: step 2/3. In Paracoccus denitrificans (strain Pd 1222), this protein is Argininosuccinate synthase.